The primary structure comprises 1832 residues: MELMFAEWEDGERFSFEDSDRFEEDSLCSFISEAESLCQNWRGWRKQSAGPNSPTGGGGGGGSGGTRTRDGLVIPLVELSAKQVAFHIPFEVVEKVYPPVPEQLQLRIAFWSFPENEEDIRLYSCLANGSADEFQRGDQLFRMRAVKDPLQIGFHLSATVVPPQMVPPKGAYNVAVMFDRCRVTSCSCTCGAGAKWCTHVVALCLFRIHNASAVCLRAPVSESLSRLQRDQLQKFAQYLISELPQQILPTAQRLLDELLSSQSTAINTVCGAPDPTAGPSASDQSTWYLDESTLTDNIKKTLHKFCGPSPVVFSDVNSMYLSSTEPPAAAEWACLLRPLRGREPEGVWNLLSIVREMFKRRDSNAAPLLEILTDQCLTYEQITGWWYSVRTSASHSSASGHTGRSNGQSEVAAHACASMCDEMVTLWRLAVLDPALSPQRRRELCAQLRQWQLKVIENVKRGQHKKTLERLFPGFRPAVEACYFNWEEAYPLPGVTYSGTDRKLALCWARALPARPGASRSGGLEESRPRPLPTEPAVRPKEPGAKRKGLGEGISSQRGPRRLSAEGGDKALHKMGPSGGKAKVLGGTGSGGKSSAGSGSKRRLSSEDSSLEPDLAEMSLDDSSLALGAEASTFGGFPESPPPCPSSVGSRGPSTFLPEPPDTYEEDAGVYFSEGPEPPTASADHPGLLPGEVCTRDDLPSTDDSGSGLHKTKEAAPAVGEEDDDYQAYYLNAQDGAGGEEEKAEGGTGEEHDLFAGLKPLEQESRMEVLFACAEALHAHGYSNEASRLTVELAQDLLANPPDLKVEPPPAKGKKNKVSTSRQTWVATNTLTKAAFLLTVLSERPEHHSLAFRVGMFALELQRPPASTKALEVKLAYQESEVAALLKKIPRGPSEMSTIRCRAEELREGTLCDYRPVLPLMLASFIFDVLCAPVVSLTGSRPPSRNWTNEMPGDEELGFEAAVAALGMKTTVSEAEHPLLCEGTRREKGDLALALMITYKDDQAKLKKILDKLLDRESQTHKPQTLSSFYSSSRPATANQRSPSKHGAPSAPGALQPLTSSSAGPAQPGNVAGAGPGPTEGFTEKNVPESSPHSPCEGLPPEAALTPRPEGKVPSRLALGSRGGYNGRGWGSPGRPKKKHTGMASIDSSAPETTSDSSPTLSRRPLRGGWAPTSWGRGQDSDSISSSSSDSLGSSSSSGSRRASASGGARAKTVDVGRCYKGRRPESHAPHVPNQPSEAAAHFYFELAKTVLIKAGGNSSTSIFTHPSSSGGHQGPHRNLHLCAFEIGLYALGLHNFVSPNWLSRTYSSHVSWITGQAMEIGSAALTILVECWDGHLTPPEVASLADRASRARDSNMVRAAAELALSCLPHAHALNPNEIQRALVQCKEQDNLMLEKACMAVEEAAKGGGVYPEVLFEVAHQWFWLYEETAGGSSTAREGATSCSGSGMRAAGEAGRGLPEGRGAPGTEPVTVAAAAVTAAATVVPVISVGSSLYPGPGLGHGHSPGLHPYTALQPHLPCSPQYLTHPAHPAHPMPHMPRPAVFPVPSSAYPQGVHPAFLGAQYPYSVTPPSLAATAVSFPVPSMAPITVHPYHTEPGLPLPTSVALSSVHPASTFPAIQGASLPALTTQPSPLVSGGFPPPEEETHSQPVNPHSLHHLHAAYRVGMLALEMLGRRAHNDHPNNFSRSPPYTDDVKWLLGLAAKLGVNYVHQFCVGAAKGVLSPFVLQEIVMETLQRLNPIHAHNHLRAPAFHQLVQRCQQAYMQYIHHRLIHLTPADYDDFVNAIRSARSAFCLTPMGMMQFNDILQNLKRSKQTKELWQRVSLEITTFSP.

3 positions are modified to phosphoserine: Ser36, Ser48, and Ser53. A disordered region spans residues 45 to 67; sequence RKQSAGPNSPTGGGGGGGSGGTR. A compositionally biased stretch (gly residues) spans 55–65; it reads TGGGGGGGSGG. The SWIM-type zinc-finger motif lies at 172-208; sequence YNVAVMFDRCRVTSCSCTCGAGAKWCTHVVALCLFRI. Residues Ser437 and Ser564 each carry the phosphoserine modification. Disordered stretches follow at residues 516 to 722, 800 to 821, and 1018 to 1216; these read PGAS…VGEE, NPPDLKVEPPPAKGKKNKVSTS, and SQTH…TVDV. Basic and acidic residues predominate over residues 563 to 572; that stretch reads LSAEGGDKAL. Over residues 1021 to 1042 the composition is skewed to polar residues; sequence HKPQTLSSFYSSSRPATANQRS. Positions 1121 to 1132 are enriched in gly residues; the sequence is SRGGYNGRGWGS. Thr1141 is modified (phosphothreonine). Positions 1146 to 1161 are enriched in polar residues; the sequence is IDSSAPETTSDSSPTL. Residues Ser1155, Ser1158, and Ser1162 each carry the phosphoserine modification. Low complexity predominate over residues 1176-1211; sequence GRGQDSDSISSSSSDSLGSSSSSGSRRASASGGARA. At Ser1270 the chain carries Phosphoserine. Positions 1435–1446 are enriched in polar residues; that stretch reads STAREGATSCSG. Residues 1435 to 1465 are disordered; the sequence is STAREGATSCSGSGMRAAGEAGRGLPEGRGA. The segment covering 1455-1465 has biased composition (gly residues); that stretch reads AGRGLPEGRGA. At Ser1831 the chain carries Phosphoserine.

It belongs to the ZSWIM8 family. As to quaternary structure, component of the SCF-like E3 ubiquitin-protein ligase complex which contains CUL3, RBX1, ELOB, ELOC and ZSWIM8. Interacts with DAB1.

The protein localises to the cytoplasm. It localises to the cytosol. It functions in the pathway protein modification; protein ubiquitination. In terms of biological role, substrate recognition component of a SCF-like E3 ubiquitin-protein ligase complex that promotes target-directed microRNA degradation (TDMD), a process that mediates degradation of microRNAs (miRNAs). The SCF-like E3 ubiquitin-protein ligase complex acts by catalyzing ubiquitination and subsequent degradation of AGO proteins (AGO1, AGO2, AGO3 and/or AGO4), thereby exposing miRNAs for degradation. Specifically recognizes and binds AGO proteins when they are engaged with a TDMD target. May also acts as a regulator of axon guidance: specifically recognizes misfolded ROBO3 and promotes its ubiquitination and subsequent degradation. Plays an essential role for proper embryonic development of heart and lung. Controls protein quality of DAB1, a key signal molecule for brain development, thus protecting its signaling strength. Mechanistically, recognizes intrinsically disordered regions of DAB1 and eliminates misfolded DAB1 that cannot be properly phosphorylated. The protein is Zinc finger SWIM domain-containing protein 8 of Mus musculus (Mouse).